A 747-amino-acid polypeptide reads, in one-letter code: Ferrichrome outer membrane transporter/phage receptor (747 aa).

An N-terminal signal peptide occupies residues Met-1–Ala-33. At Ala-34–Glu-192 the chain is on the periplasmic side. The short motif at Asp-40–Ala-47 is the TonB box element. The TBDR plug domain maps to Pro-75–Lys-187. Residues Arg-114, Gln-133, and Phe-148–Tyr-149 contribute to the ferrichrome site. The TBDR beta-barrel domain maps to Glu-192–Phe-747. Residues Pro-193 to Ala-201 form a beta stranded membrane-spanning segment. The Extracellular segment spans residues Gly-202–Leu-206. A beta stranded membrane pass occupies residues Phe-207 to Asp-215. Residues Ser-216–Val-222 are Periplasmic-facing. Residues Tyr-223–Ala-231 form a beta stranded membrane-spanning segment. Topologically, residues Arg-232–Arg-245 are extracellular. A beta stranded membrane pass occupies residues Tyr-246–Arg-255. Residues Pro-256–Lys-259 are Periplasmic-facing. Residues Thr-260–Phe-268 form a beta stranded membrane-spanning segment. The Extracellular segment spans residues Gln-269–Glu-312. Position 277 to 279 (Tyr-277 to Trp-279) interacts with ferrichrome. The beta stranded transmembrane segment at Lys-313–His-321 threads the bilayer. Over Glu-322–Thr-326 the chain is Periplasmic. Residues Phe-327 to Phe-335 form a beta stranded membrane-spanning segment. Residues Ala-336 to Asn-387 lie on the Extracellular side of the membrane. Ferrichrome is bound at residue Tyr-346 to Tyr-348. Cys-351 and Cys-362 are oxidised to a cystine. The chain crosses the membrane as a beta stranded span at residues Phe-388–Ser-396. Over Lys-397 to Asp-404 the chain is Periplasmic. Residues His-405 to Phe-413 form a beta stranded membrane-spanning segment. At Met-414 to Gln-464 the chain is on the extracellular side. Phe-424 lines the ferrichrome pocket. Residues Thr-465–Ala-473 traverse the membrane as a beta stranded segment. Residues Gln-474–Lys-477 lie on the Periplasmic side of the membrane. A beta stranded transmembrane segment spans residues Val-478 to Tyr-486. Residues Asp-487 to Gln-508 are Extracellular-facing. Residues Phe-509–Tyr-517 form a beta stranded membrane-spanning segment. Residues Leu-518–Gly-522 are Periplasmic-facing. Residues Val-523–Glu-531 traverse the membrane as a beta stranded segment. Residues Ser-532–Gly-551 are Extracellular-facing. Residues Lys-552–Tyr-560 form a beta stranded membrane-spanning segment. Over Val-561–Arg-565 the chain is Periplasmic. A beta stranded membrane pass occupies residues Pro-566 to Tyr-574. The Extracellular segment spans residues Asn-575–Arg-601. Residues Gly-602–Ala-610 form a beta stranded membrane-spanning segment. Residues Leu-611–Ala-613 are Periplasmic-facing. Residues Ser-614 to Thr-622 form a beta stranded membrane-spanning segment. Topologically, residues Tyr-623 to His-645 are extracellular. A beta stranded transmembrane segment spans residues Met-646–Thr-654. Residues Phe-655 to Ser-661 are Periplasmic-facing. A beta stranded transmembrane segment spans residues Gly-662 to Arg-670. At Tyr-671 to Thr-689 the chain is on the extracellular side. The beta stranded transmembrane segment at Val-690–Asp-698 threads the bilayer. At Leu-699–Ala-705 the chain is on the periplasmic side. Residues Gly-706–Asn-714 traverse the membrane as a beta stranded segment. Residues Asn-715–Arg-737 lie on the Extracellular side of the membrane. A disulfide bridge connects residues Cys-725 and Cys-731. Residues Gly-730–Phe-747 carry the TonB C-terminal box motif. Ala-735 is a binding site for ferrichrome. A beta stranded membrane pass occupies residues Gln-738–Arg-746. Phe-747 is a topological domain (periplasmic).

This sequence belongs to the TonB-dependent receptor family. As to quaternary structure, monomer. Interacts with TonB. Interacts with Escherichia phage T5 receptor-binding protein pb5 (RBP-pb5); this interaction is necessary for the entry of the viral genome into the host cell.

Its subcellular location is the cell outer membrane. Its activity is regulated as follows. Binding of ferrichrome or colicin M enhances the interaction between FhuA and TonB. TonB activates FhuA through interaction with the beta-barrel. Its function is as follows. Involved in the uptake of iron in complex with ferrichrome, a hydroxamate-type siderophore. Binds and transports ferrichrome-iron across the outer membrane. In addition to its role in ferrichrome-iron transport, transports the antibiotic albomycin, which is a structural analog of ferrichrome, and acts as a receptor for colicin M, microcin J25 and bacteriophages T1, T5, phi80 and UC-1. The energy source, which is required for all FhuA functions except infection by phage T5, is provided by the inner membrane TonB system. The protein is Ferrichrome outer membrane transporter/phage receptor of Escherichia coli (strain K12).